The sequence spans 310 residues: tRNA-cytidine(32) 2-sulfurtransferase (310 aa).

Positions 58–63 (SGGKDS) match the PP-loop motif motif. The [4Fe-4S] cluster site is built by Cys133, Cys136, and Cys224.

It belongs to the TtcA family. In terms of assembly, homodimer. It depends on Mg(2+) as a cofactor. [4Fe-4S] cluster serves as cofactor.

Its subcellular location is the cytoplasm. The enzyme catalyses cytidine(32) in tRNA + S-sulfanyl-L-cysteinyl-[cysteine desulfurase] + AH2 + ATP = 2-thiocytidine(32) in tRNA + L-cysteinyl-[cysteine desulfurase] + A + AMP + diphosphate + H(+). It functions in the pathway tRNA modification. Its function is as follows. Catalyzes the ATP-dependent 2-thiolation of cytidine in position 32 of tRNA, to form 2-thiocytidine (s(2)C32). The sulfur atoms are provided by the cysteine/cysteine desulfurase (IscS) system. The chain is tRNA-cytidine(32) 2-sulfurtransferase from Paracidovorax citrulli (strain AAC00-1) (Acidovorax citrulli).